A 78-amino-acid polypeptide reads, in one-letter code: Probable Fe(2+)-trafficking protein (78 aa).

It belongs to the Fe(2+)-trafficking protein family. As to quaternary structure, monomer.

Could be a mediator in iron transactions between iron acquisition and iron-requiring processes, such as synthesis and/or repair of Fe-S clusters in biosynthetic enzymes. This is Probable Fe(2+)-trafficking protein from Buchnera aphidicola subsp. Schizaphis graminum (strain Sg).